Consider the following 208-residue polypeptide: Small ribosomal subunit protein uS4 (208 aa).

The S4 RNA-binding domain maps to 98–161; sequence QRLDNVVYRM…KTNPQIVRAI (64 aa).

Belongs to the universal ribosomal protein uS4 family. Part of the 30S ribosomal subunit. Contacts protein S5. The interaction surface between S4 and S5 is involved in control of translational fidelity.

Its function is as follows. One of the primary rRNA binding proteins, it binds directly to 16S rRNA where it nucleates assembly of the body of the 30S subunit. Functionally, with S5 and S12 plays an important role in translational accuracy. This chain is Small ribosomal subunit protein uS4, found in Campylobacter fetus subsp. fetus (strain 82-40).